The primary structure comprises 180 residues: Pro-glucagon (180 aa).

The signal sequence occupies residues 1–20; sequence MKNIYIVAGFFVVLVQGSWQ. The tract at residues 25-59 is disordered; that stretch reads DTEEKSRSFPASQTDPLEDPDQINEDKRHSQGTFT. Ser54 bears the Phosphoserine mark. A propeptide spanning residues 84 to 89 is cleaved from the precursor; that stretch reads NRNNIA. Phosphoserine is present on residues Ser105 and Ser108. At Arg127 the chain carries Arginine amide. Residues 131 to 145 constitute a propeptide that is removed on maturation; it reads DFPEEVTIVEELGRR. Phosphoserine occurs at positions 150 and 152.

The protein belongs to the glucagon family. In terms of processing, proglucagon is post-translationally processed in a tissue-specific manner in pancreatic A cells and intestinal L cells. In pancreatic A cells, the major bioactive hormone is glucagon cleaved by PCSK2/PC2. In the intestinal L cells PCSK1/PC1 liberates GLP-1, GLP-2, glicentin and oxyntomodulin. GLP-1 is further N-terminally truncated by post-translational processing in the intestinal L cells resulting in GLP-1(7-37) GLP-1-(7-36)amide. The C-terminal amidation is neither important for the metabolism of GLP-1 nor for its effects on the endocrine pancreas.

Its subcellular location is the secreted. Functionally, plays a key role in glucose metabolism and homeostasis. Regulates blood glucose by increasing gluconeogenesis and decreasing glycolysis. A counterregulatory hormone of insulin, raises plasma glucose levels in response to insulin-induced hypoglycemia. Plays an important role in initiating and maintaining hyperglycemic conditions in diabetes. Potent stimulator of glucose-dependent insulin release. Also stimulates insulin release in response to IL6. Plays important roles on gastric motility and the suppression of plasma glucagon levels. May be involved in the suppression of satiety and stimulation of glucose disposal in peripheral tissues, independent of the actions of insulin. Has growth-promoting activities on intestinal epithelium. May also regulate the hypothalamic pituitary axis (HPA) via effects on LH, TSH, CRH, oxytocin, and vasopressin secretion. Increases islet mass through stimulation of islet neogenesis and pancreatic beta cell proliferation. Inhibits beta cell apoptosis. Its function is as follows. Stimulates intestinal growth and up-regulates villus height in the small intestine, concomitant with increased crypt cell proliferation and decreased enterocyte apoptosis. The gastrointestinal tract, from the stomach to the colon is the principal target for GLP-2 action. Plays a key role in nutrient homeostasis, enhancing nutrient assimilation through enhanced gastrointestinal function, as well as increasing nutrient disposal. Stimulates intestinal glucose transport and decreases mucosal permeability. In terms of biological role, significantly reduces food intake. Inhibits gastric emptying in humans. Suppression of gastric emptying may lead to increased gastric distension, which may contribute to satiety by causing a sensation of fullness. Functionally, may modulate gastric acid secretion and the gastro-pyloro-duodenal activity. May play an important role in intestinal mucosal growth in the early period of life. This Mesocricetus auratus (Golden hamster) protein is Pro-glucagon (GCG).